Here is a 308-residue protein sequence, read N- to C-terminus: Protoheme IX farnesyltransferase (308 aa).

Helical transmembrane passes span 20-40 (LLAY…VTAI), 50-70 (AIHP…AAGA), 102-122 (NALA…WCAT), 124-144 (LLAG…YTLW), 149-169 (TSQN…IGWS), 170-190 (AITG…FFWT), 227-249 (LIYT…WLYG), and 288-308 (YLAV…PTLH).

The protein belongs to the UbiA prenyltransferase family. Protoheme IX farnesyltransferase subfamily.

The protein resides in the cell membrane. It catalyses the reaction heme b + (2E,6E)-farnesyl diphosphate + H2O = Fe(II)-heme o + diphosphate. It functions in the pathway porphyrin-containing compound metabolism; heme O biosynthesis; heme O from protoheme: step 1/1. Its function is as follows. Converts heme B (protoheme IX) to heme O by substitution of the vinyl group on carbon 2 of heme B porphyrin ring with a hydroxyethyl farnesyl side group. This Mycobacterium tuberculosis (strain ATCC 25618 / H37Rv) protein is Protoheme IX farnesyltransferase.